The primary structure comprises 159 residues: MRIGHGFDVHAFGGEGPIIIGGVRIPYEKGLLAHSDGDVALHALTDALLGAAALGDIGKLFPDTDPAFKGADSRELLREAWRRIQAKGYTLGNVDVTIIAQAPKMLPHIPQMRVFIAEDLGCHMDDVNVKATTTEKLGFTGRGEGIACEAVALLRKADK.

A divalent metal cation-binding residues include Asp-8 and His-10. 4-CDP-2-C-methyl-D-erythritol 2-phosphate-binding positions include 8 to 10 and 34 to 35; these read DVH and HS. His-42 contacts a divalent metal cation. 4-CDP-2-C-methyl-D-erythritol 2-phosphate contacts are provided by residues 56–58, 61–65, 100–106, 132–135, Phe-139, and Arg-142; these read DIG, FPDTD, AQAPKML, and TTTE.

Belongs to the IspF family. Homotrimer. A divalent metal cation serves as cofactor.

The enzyme catalyses 4-CDP-2-C-methyl-D-erythritol 2-phosphate = 2-C-methyl-D-erythritol 2,4-cyclic diphosphate + CMP. It participates in isoprenoid biosynthesis; isopentenyl diphosphate biosynthesis via DXP pathway; isopentenyl diphosphate from 1-deoxy-D-xylulose 5-phosphate: step 4/6. Its function is as follows. Involved in the biosynthesis of isopentenyl diphosphate (IPP) and dimethylallyl diphosphate (DMAPP), two major building blocks of isoprenoid compounds. Catalyzes the conversion of 4-diphosphocytidyl-2-C-methyl-D-erythritol 2-phosphate (CDP-ME2P) to 2-C-methyl-D-erythritol 2,4-cyclodiphosphate (ME-CPP) with a corresponding release of cytidine 5-monophosphate (CMP). In Klebsiella pneumoniae subsp. pneumoniae (strain ATCC 700721 / MGH 78578), this protein is 2-C-methyl-D-erythritol 2,4-cyclodiphosphate synthase.